The sequence spans 119 residues: Large ribosomal subunit protein bL20 (119 aa).

It belongs to the bacterial ribosomal protein bL20 family.

Binds directly to 23S ribosomal RNA and is necessary for the in vitro assembly process of the 50S ribosomal subunit. It is not involved in the protein synthesizing functions of that subunit. The polypeptide is Large ribosomal subunit protein bL20 (Streptococcus suis (strain 98HAH33)).